We begin with the raw amino-acid sequence, 126 residues long: Small ribosomal subunit protein uS12 (126 aa).

D89 is subject to 3-methylthioaspartic acid. The interval 106-126 (GVRERRRSRSKYGAKMPRSAA) is disordered.

It belongs to the universal ribosomal protein uS12 family. In terms of assembly, part of the 30S ribosomal subunit. Contacts proteins S8 and S17. May interact with IF1 in the 30S initiation complex.

In terms of biological role, with S4 and S5 plays an important role in translational accuracy. Interacts with and stabilizes bases of the 16S rRNA that are involved in tRNA selection in the A site and with the mRNA backbone. Located at the interface of the 30S and 50S subunits, it traverses the body of the 30S subunit contacting proteins on the other side and probably holding the rRNA structure together. The combined cluster of proteins S8, S12 and S17 appears to hold together the shoulder and platform of the 30S subunit. This chain is Small ribosomal subunit protein uS12, found in Tremblaya princeps.